Here is a 421-residue protein sequence, read N- to C-terminus: Testin (421 aa).

Residues 92–199 (MILTNPVAAK…GDVKLPRDMN (108 aa)) enclose the PET domain. Disordered stretches follow at residues 133-164 (EKQPVAGSEGAQYRKKQLAKQLPAHDQDPSKC) and 193-213 (KLPRDMNTQGPNKMYIPGGDR). A compositionally biased stretch (basic and acidic residues) spans 155 to 164 (PAHDQDPSKC). LIM zinc-binding domains lie at 234 to 297 (YSCY…CDSE), 299 to 359 (PRCA…NHAV), and 362 to 421 (QGCH…KMMS).

It belongs to the prickle / espinas / testin family. Interacts via LIM domain 1 with ZYX. Interacts (via LIM domain 3) with ENAH and VASP. Interacts with ALKBH4, talin, actin, alpha-actinin, GRIP1 and PXN. Interacts (via LIM domain 2) with ACTL7A (via N-terminus). Heterodimer with ACTL7A; the heterodimer interacts with ENAH to form a heterotrimer.

It localises to the cytoplasm. It is found in the cell junction. The protein resides in the focal adhesion. Its function is as follows. Scaffold protein that may play a role in cell adhesion, cell spreading and in the reorganization of the actin cytoskeleton. Plays a role in the regulation of cell proliferation. May act as a tumor suppressor. The polypeptide is Testin (TES) (Ovis aries (Sheep)).